The primary structure comprises 659 residues: Pentatricopeptide repeat-containing protein At3g26782, mitochondrial (659 aa).

The transit peptide at 1-24 (MKVRSKKALFCSVSRLLHTERHTE) directs the protein to the mitochondrion. 12 PPR repeats span residues 40–74 (DVFS…SLYP), 75–109 (TRSS…GYQS), 110–144 (DIFV…NIVS), 145–171 (WTSM…LLVD), 182–216 (DSMG…GFDR), 217–249 (GVSV…IVDK), 250–284 (DRVS…KVVT), 286–320 (NAIT…GLED), 321–351 (DVIV…MKNK), 352–386 (NVRS…GVRP), 387–422 (NYIT…GVEP), and 423–453 (GLEH…MKMK). The type E motif stretch occupies residues 458–533 (IWSSLLAACR…PPGFSLLELN (76 aa)). Residues 534–564 (GEVHVFLIGDEEHPQREKIYEFLAELNRKLL) are type E(+) motif. Positions 565 to 659 (EAGYVSNTSS…DGGCSCGDYW (95 aa)) are type DYW motif.

Belongs to the PPR family. PCMP-H subfamily.

Its subcellular location is the mitochondrion. This Arabidopsis thaliana (Mouse-ear cress) protein is Pentatricopeptide repeat-containing protein At3g26782, mitochondrial (PCMP-H34).